Reading from the N-terminus, the 269-residue chain is Hemin import ATP-binding protein HmuV (269 aa).

The region spanning 5 to 242 (LDAEAASFAI…SLIRRVFDIA (238 aa)) is the ABC transporter domain. 37 to 44 (GPNGAGKS) is a binding site for ATP.

It belongs to the ABC transporter superfamily. Heme (hemin) importer (TC 3.A.1.14.5) family. As to quaternary structure, the complex is composed of two ATP-binding proteins (HmuV), two transmembrane proteins (HmuU) and a solute-binding protein (HmuT).

Its subcellular location is the cell inner membrane. In terms of biological role, part of the ABC transporter complex HmuTUV involved in hemin import. Responsible for energy coupling to the transport system. This chain is Hemin import ATP-binding protein HmuV, found in Rhodopseudomonas palustris (strain BisB18).